Here is a 403-residue protein sequence, read N- to C-terminus: Farnesyl pyrophosphate synthase (403 aa).

Mg(2+) contacts are provided by aspartate 156 and aspartate 160. The short motif at 156-160 (DDLAD) is the DDXXD motif element.

It belongs to the FPP/GGPP synthase family. Requires Mg(2+) as cofactor.

It carries out the reaction isopentenyl diphosphate + (2E)-geranyl diphosphate = (2Z,6E)-farnesyl diphosphate + diphosphate. It participates in pheromone biosynthesis. Farnesyl pyrophosphate synthase involved in pheromone biosynthesis by catalyzing the formation of (2Z,6E)-farnesyl diphosphate. This Nezara viridula (Southern green stink bug) protein is Farnesyl pyrophosphate synthase.